A 1774-amino-acid chain; its full sequence is MAPDPSRRLCLLLLLLLSCRLVPASADGNSLSPLNPLVWLWPPKTSDSLEGPVSKPQNSSPVQSTENPTTHVVPQDGLTEQQTTPASSELPPEEEEEEDQKAGQGGSPATPAVPIPLVAPAASPDMKEENVAGVGAKILNVAQGIRSFVQLWDEDSTIGHSAGTEVPDSSIPTVLPSPAELSSAPQGSKTTLWLSSAIPSSPDAQTTEAGTLAVPTQLPPFQSNLQAPLGRPSAPPDFPGRAFLSSSTDQGSSWGNQEPPRQPQHLEGKGFLPMTARSSQQHRHSDVHSDIHGHVPLLPLVTGPLVTASLSVHGLLSVPSSDPSGQLSQVAALPGFPGTWVSHVAPSSGTGLSNDSALAGNGSLTSTSRCLPLPPTLTLCSRLGIGHFWLPNHLHHTDSVEVEATVQAWGRFLHTNCHPFLAWFFCLLLAPSCGPGPPPPLPPCRQFCEALEDECWNYLAGDRLPVVCASLPSQEDGYCVFIGPAAENVAEEVGLLQLLGDPLPEKISQIDDPHVGPAYIFGPDSNSGQVAQYHFPKLFFRDFSLLFHVRPATEAAGVLFAITDAAQVVVSLGVKLSEVRDGQQNISLLYTEPGASQTQTGASFRLPAFVGQWTHFALSVDGGSVALYVDCEEFQRVPFARASQGLELERGAGLFVGQAGTADPDKFQGMISELKVRKTPRVSPVHCLDEEDDDEDRASGDFGSGFEESSKSHKEDTSLLPGLPQPPPVTSPPLAGGSTTEDPRTEETEEDAAVDSIGAETLPGTGSSGAWDEAIQNPGRGLIKGGMKGQKGEPGAQGPPGPAGPQGPAGPVVQSPNSQPVPGAQGPPGPQGPPGKDGTPGRDGEPGDPGEDGRPGDTGPQGFPGTPGDVGPKGEKGDPGIGPRGPPGPPGPPGPSFRQDKLTFIDMEGSGFSGDIESLRGPRGFPGPPGPPGVPGLPGEPGRFGINGSYAPGPAGLPGVPGKEGPPGFPGPPGPPGPPGKEGPPGVAGQKGSVGDVGIPGPKGSKGDLGPIGMPGKSGLAGSPGPVGPPGPPGPPGPPGPGFAAGFDDMEGSGIPLWTTARSSDGLQGPPGSPGLKGDPGVAGLPGAKGEVGADGAQGIPGPPGREGAAGSPGPKGEKGMPGEKGNPGKDGVGRPGLPGPPGPPGPVIYVSSEDKAIVSTPGPEGKPGYAGFPGPAGPKGDLGSKGEQGLPGPKGEKGEPGTIFSPDGRALGHPQKGAKGEPGFRGPPGPYGRPGHKGEIGFPGRPGRPGTNGLKGEKGEPGDASLGFSMRGLPGPPGPPGPPGPPGMPIYDSNAFVESGRPGLPGQQGVQGPSGPKGDKGEVGPPGPPGQFPIDLFHLEAEMKGDKGDRGDAGQKGERGEPGAPGGGFFSSSVPGPPGPPGYPGIPGPKGESIRGPPGPPGPQGPPGIGYEGRQGPPGPPGPPGPPSFPGPHRQTVSVPGPPGPPGPPGPPGAMGASAGQVRIWATYQTMLDKIREVPEGWLIFVAEREELYVRVRNGFRKVLLEARTALPRGTGNEVAALQPPLVQLHEGSPYTRREYSYSTARPWRADDILANPPRLPDRQPYPGVPHHHSSYVHLPPARPTLSLAHTHQDFQPVLHLVALNTPLSGGMRGIRGADFQCFQQARAVGLSGTFRAFLSSRLQDLYSIVRRADRGSVPIVNLKDEVLSPSWDSLFSGSQGQLQPGARIFSFDGRDVLRHPAWPQKSVWHGSDPSGRRLMESYCETWRTETTGATGQASSLLSGRLLEQKAASCHNSYIVLCIENSFMTSFSK.

The signal sequence occupies residues 1–26; the sequence is MAPDPSRRLCLLLLLLLSCRLVPASA. Residues 27 to 785 are nonhelical region 1 (NC1); the sequence is DGNSLSPLNP…QNPGRGLIKG (759 aa). 2 disordered regions span residues 47–113 and 218–269; these read DSLE…TPAV and LPPF…LEGK. 2 stretches are compositionally biased toward polar residues: residues 55 to 87 and 244 to 256; these read KPQN…TPAS and LSSS…SWGN. N-linked (GlcNAc...) asparagine glycans are attached at residues Asn-354 and Asn-361. Residues 365-482 form the FZ domain; the sequence is TSTSRCLPLP…SQEDGYCVFI (118 aa). 5 disulfides stabilise this stretch: Cys-370–Cys-433, Cys-380–Cys-426, Cys-417–Cys-455, Cys-444–Cys-479, and Cys-448–Cys-468. The region spanning 522 to 704 is the Laminin G-like domain; the sequence is GPDSNSGQVA…EDRASGDFGS (183 aa). A glycan (N-linked (GlcNAc...) asparagine) is linked at Asn-585. The tract at residues 681-1458 is disordered; sequence RVSPVHCLDE…PPGPPGAMGA (778 aa). Residues 708–717 are compositionally biased toward basic and acidic residues; it reads ESSKSHKEDT. At Thr-730 the chain carries Phosphothreonine. A triple-helical region 1 (COL1) region spans residues 786–812; the sequence is GMKGQKGEPGAQGPPGPAGPQGPAGPV. The span at 809 to 824 shows a compositional bias: low complexity; that stretch reads AGPVVQSPNSQPVPGA. The tract at residues 813 to 822 is nonhelical region 2 (NC2); sequence VQSPNSQPVP. Positions 823–878 constitute a Collagen-like 1 domain; that stretch reads GAQGPPGPQGPPGKDGTPGRDGEPGDPGEDGRPGDTGPQGFPGTPGDVGPKGEKGD. Residues 823–896 are triple-helical region 2 (COL2); it reads GAQGPPGPQG…PGPPGPPGPS (74 aa). The segment covering 839–855 has biased composition (basic and acidic residues); sequence TPGRDGEPGDPGEDGRP. Over residues 884 to 895 the composition is skewed to pro residues; sequence RGPPGPPGPPGP. The segment at 897-920 is nonhelical region 3 (NC3); it reads FRQDKLTFIDMEGSGFSGDIESLR. The O-linked (Xyl...) (chondroitin sulfate) serine glycan is linked to Ser-910. Residues 921–1042 are triple-helical region 3 (COL3); sequence GPRGFPGPPG…PGPPGPPGPG (122 aa). Positions 925 to 935 are enriched in pro residues; sequence FPGPPGPPGVP. N-linked (GlcNAc...) asparagine glycosylation is present at Asn-947. Residues 951 to 963 are compositionally biased toward low complexity; sequence APGPAGLPGVPGK. Collagen-like domains lie at 953-1007 and 1008-1041; these read GPAG…GSKG and DLGP…PPGP. 2 stretches are compositionally biased toward pro residues: residues 967–982 and 1026–1041; these read PGFP…PGKE and PVGP…PPGP. The segment at 1043–1065 is nonhelical region 4 (NC4); sequence FAAGFDDMEGSGIPLWTTARSSD. 4 consecutive Collagen-like domains span residues 1066–1117, 1118–1147, 1162–1202, and 1216–1264; these read GLQG…GPKG, EKGM…PPGP, PGPE…GEPG, and QKGA…EPGD. Residues 1066–1148 are triple-helical region 4 (COL4); it reads GLQGPPGSPG…PGPPGPPGPV (83 aa). The span at 1138–1147 shows a compositional bias: pro residues; that stretch reads LPGPPGPPGP. The interval 1149–1162 is nonhelical region 5 (NC5); it reads IYVSSEDKAIVSTP. Positions 1163–1204 are triple-helical region 5 (COL5); it reads GPEGKPGYAGFPGPAGPKGDLGSKGEQGLPGPKGEKGEPGTI. The segment at 1205–1217 is nonhelical region 6 (NC6); that stretch reads FSPDGRALGHPQK. The interval 1218–1290 is triple-helical region 6 (COL6); the sequence is GAKGEPGFRG…PGPPGPPGMP (73 aa). Residues 1275-1289 show a composition bias toward pro residues; that stretch reads PGPPGPPGPPGPPGM. A nonhelical region 7 (NC7) region spans residues 1291-1300; it reads IYDSNAFVES. Over residues 1301–1317 the composition is skewed to low complexity; sequence GRPGLPGQQGVQGPSGP. The segment at 1301–1333 is triple-helical region 7 (COL7); it reads GRPGLPGQQGVQGPSGPKGDKGEVGPPGPPGQF. The tract at residues 1334 to 1345 is nonhelical region 8 (NC8); it reads PIDLFHLEAEMK. Residues 1338 to 1362 are compositionally biased toward basic and acidic residues; it reads FHLEAEMKGDKGDRGDAGQKGERGE. A triple-helical region 8 (COL8) region spans residues 1346-1369; sequence GDKGDRGDAGQKGERGEPGAPGGG. The Cell attachment site motif lies at 1351-1353; that stretch reads RGD. Residues 1370-1376 form a nonhelical region 9 (NC9) region; the sequence is FFSSSVP. Composition is skewed to pro residues over residues 1376–1388, 1398–1407, 1418–1431, and 1441–1453; these read PGPP…PGIP, PPGPPGPQGP, PPGP…PSFP, and PGPP…PGPP. A triple-helical region 9 (COL9) region spans residues 1377 to 1428; that stretch reads GPPGPPGYPGIPGPKGESIRGPPGPPGPQGPPGIGYEGRQGPPGPPGPPGPP. The interval 1429–1441 is nonhelical region 10 (NC10); the sequence is SFPGPHRQTVSVP. The triple-helical region 10 (COL10) stretch occupies residues 1442–1459; it reads GPPGPPGPPGPPGAMGAS. The nonhelical region 11 (NC11) stretch occupies residues 1460–1774; it reads AGQVRIWATY…ENSFMTSFSK (315 aa). The non-collagenous domain 1 association domain stretch occupies residues 1474–1519; that stretch reads DKIREVPEGWLIFVAEREELYVRVRNGFRKVLLEARTALPRGTGNE. Positions 1520-1590 are non-collagenous domain 1 hinge region; the sequence is VAALQPPLVQ…PPARPTLSLA (71 aa). Zn(2+) is bound by residues His-1591, His-1593, Asp-1595, His-1601, and Asp-1666. 2 disulfide bridges follow: Cys-1623–Cys-1763 and Cys-1725–Cys-1755.

The protein belongs to the multiplexin collagen family. As to quaternary structure, forms homotrimers. Recombinant non-collagenous domain 1 has stronger affinity to NID1, HSPG2 and laminin-1:NID1 complex and lower affinity to FBLN1 and FBLN2 than endostatin. In terms of assembly, monomeric. Interacts with KDR/VEGFR2. Interacts with the ITGA5:ITGB1 complex. Interacts with NID1, HSPG2, laminin-1:NID1 complex, FBLN1 and FBLN2. In terms of processing, prolines at the third position of the tripeptide repeating unit (G-X-Y) of the triple-helical regions are hydroxylated. Undergoes proteolytic processing by CTSL/cathepsin-L and elastase-like proteases to generate both non-collagenous domain 1 trimers and endostatin monomers. In tissue extracts (brain, skeletal muscle, heart, kidney, testis and liver) predominantly bands of approximately 38 kDa are detected; recombinant non-collagenous domain 1 shows similar mobility. In vitro, several proteolytic cleavage sites in the non-collagenous domain 1 hinge region generating different endostatin-like peptides are reported. Expressed in liver, kidney, lung, skeletal muscle and testis.

Its subcellular location is the secreted. It localises to the extracellular space. The protein resides in the extracellular matrix. It is found in the basement membrane. Its function is as follows. Probably plays a major role in determining the retinal structure as well as in the closure of the neural tube. Functionally, may regulate extracellular matrix-dependent motility and morphogenesis of endothelial and non-endothelial cells; the function requires homotrimerization and implicates MAPK signaling. In terms of biological role, potently inhibits endothelial cell proliferation and angiogenesis. May inhibit angiogenesis by binding to the heparan sulfate proteoglycans involved in growth factor signaling. Inhibits VEGFA isoform VEGF165-induced endothelial cell proliferation and migration. Seems to inhibit VEGFA-mediated signaling by blocking the interaction of VEGFA to its receptor KDR/VEGFR2. Modulates endothelial cell migration in an integrin-dependent manner implicating integrin ITGA5:ITGB1 and to a lesser extent ITGAV:ITGB3 and ITGAV:ITGB5. May negatively regulate the activity of homotrimeric non-collagenous domain 1. In Mus musculus (Mouse), this protein is Collagen alpha-1(XVIII) chain.